The sequence spans 177 residues: Large ribosomal subunit protein uL6 (177 aa).

Belongs to the universal ribosomal protein uL6 family. As to quaternary structure, part of the 50S ribosomal subunit.

Its function is as follows. This protein binds to the 23S rRNA, and is important in its secondary structure. It is located near the subunit interface in the base of the L7/L12 stalk, and near the tRNA binding site of the peptidyltransferase center. This is Large ribosomal subunit protein uL6 from Thioalkalivibrio sulfidiphilus (strain HL-EbGR7).